The primary structure comprises 368 residues: tRNA/tmRNA (uracil-C(5))-methyltransferase (368 aa).

S-adenosyl-L-methionine is bound by residues Gln-190, Tyr-218, Asn-223, Glu-239, and Asp-301. Residue Cys-326 is the Nucleophile of the active site. Residue Glu-360 is the Proton acceptor of the active site.

This sequence belongs to the class I-like SAM-binding methyltransferase superfamily. RNA M5U methyltransferase family. TrmA subfamily.

It carries out the reaction uridine(54) in tRNA + S-adenosyl-L-methionine = 5-methyluridine(54) in tRNA + S-adenosyl-L-homocysteine + H(+). It catalyses the reaction uridine(341) in tmRNA + S-adenosyl-L-methionine = 5-methyluridine(341) in tmRNA + S-adenosyl-L-homocysteine + H(+). Functionally, dual-specificity methyltransferase that catalyzes the formation of 5-methyluridine at position 54 (m5U54) in all tRNAs, and that of position 341 (m5U341) in tmRNA (transfer-mRNA). The protein is tRNA/tmRNA (uracil-C(5))-methyltransferase of Aliivibrio fischeri (strain MJ11) (Vibrio fischeri).